The primary structure comprises 155 residues: Small ribosomal subunit protein uS7cz/uS7cy (155 aa).

Belongs to the universal ribosomal protein uS7 family. Part of the 30S ribosomal subunit.

It is found in the plastid. It localises to the chloroplast. Functionally, one of the primary rRNA binding proteins, it binds directly to 16S rRNA where it nucleates assembly of the head domain of the 30S subunit. This Populus trichocarpa (Western balsam poplar) protein is Small ribosomal subunit protein uS7cz/uS7cy (rps7-A).